Here is a 344-residue protein sequence, read N- to C-terminus: Methionine import ATP-binding protein MetN (344 aa).

One can recognise an ABC transporter domain in the interval 2 to 241; sequence IEIRNLSQRF…PHHEVTRALI (240 aa). 38–45 provides a ligand contact to ATP; sequence GRSGAGKS.

Belongs to the ABC transporter superfamily. Methionine importer (TC 3.A.1.24) family. The complex is composed of two ATP-binding proteins (MetN), two transmembrane proteins (MetI) and a solute-binding protein (MetQ).

The protein resides in the cell inner membrane. The catalysed reaction is L-methionine(out) + ATP + H2O = L-methionine(in) + ADP + phosphate + H(+). It carries out the reaction D-methionine(out) + ATP + H2O = D-methionine(in) + ADP + phosphate + H(+). Part of the ABC transporter complex MetNIQ involved in methionine import. Responsible for energy coupling to the transport system. The chain is Methionine import ATP-binding protein MetN from Burkholderia thailandensis (strain ATCC 700388 / DSM 13276 / CCUG 48851 / CIP 106301 / E264).